Consider the following 167-residue polypeptide: Histidinol dehydrogenase (167 aa).

The Zn(2+) site is built by Gln-109 and His-112.

This sequence belongs to the histidinol dehydrogenase family. In terms of assembly, homodimer. The cofactor is Zn(2+).

It catalyses the reaction L-histidinol + 2 NAD(+) + H2O = L-histidine + 2 NADH + 3 H(+). It functions in the pathway amino-acid biosynthesis; L-histidine biosynthesis; L-histidine from 5-phospho-alpha-D-ribose 1-diphosphate: step 9/9. Its function is as follows. Catalyzes the sequential NAD-dependent oxidations of L-histidinol to L-histidinaldehyde and then to L-histidine. This chain is Histidinol dehydrogenase (hisD), found in Salmonella enteritidis.